The chain runs to 490 residues: Colicin-5 (490 aa).

Over residues 1 to 20 (MDKVTDNSPDVESTESTEGS) the composition is skewed to polar residues. 2 disordered regions span residues 1-29 (MDKVTDNSPDVESTESTEGSFPTVGVDTG) and 146-171 (QKAREEAEAAEKALREAERQRDEIAR). A compositionally biased stretch (basic and acidic residues) spans 146–170 (QKAREEAEAAEKALREAERQRDEIA). A helical membrane pass occupies residues 447-467 (IVALMFSFIVGVPLGFWGIAI).

The protein belongs to the channel forming colicin family.

The protein localises to the host membrane. In terms of biological role, this colicin is a channel-forming colicin. This class of transmembrane toxins depolarize the cytoplasmic membrane, leading to dissipation of cellular energy. Its function is as follows. Colicins are polypeptide toxins produced by and active against E.coli and closely related bacteria. The sequence is that of Colicin-5 (cfa) from Escherichia coli.